The chain runs to 321 residues: Cilia- and flagella-associated protein 161 (321 aa).

The tract at residues 275–321 (LSTMLDLPKPPAEDTRALEQEREQVSDPGARSTPDARGCVPQCTLPM) is disordered. Over residues 285-299 (PAEDTRALEQEREQV) the composition is skewed to basic and acidic residues.

Microtubule inner protein component of sperm flagellar doublet microtubules. As to expression, expressed in trachea multiciliated cells.

The protein localises to the cytoplasm. It is found in the cytoskeleton. Its subcellular location is the cilium axoneme. It localises to the flagellum axoneme. Functionally, microtubule inner protein (MIP) part of the dynein-decorated doublet microtubules (DMTs) in cilia axoneme, which is required for motile cilia beating. This Bos taurus (Bovine) protein is Cilia- and flagella-associated protein 161.